Consider the following 398-residue polypeptide: GTP cyclohydrolase-2 (398 aa).

Residues 1–172 (MNTPTHTHPH…TAAACASTTE (172 aa)) are unknown. Residues 173 to 398 (YELVTRTPVP…VKPIAKTGHA (226 aa)) form a GTP cyclohydrolase II region. Residue 220–224 (RVHSS) participates in GTP binding. C225, C236, and C238 together coordinate Zn(2+). GTP-binding positions include Q241, 263 to 265 (EGR), and T285. Catalysis depends on D297, which acts as the Proton acceptor. R299 functions as the Nucleophile in the catalytic mechanism. GTP is bound by residues S320 and K325. Residues 375–398 (QRPQDPSETVDGETVKPIAKTGHA) are disordered.

In the C-terminal section; belongs to the GTP cyclohydrolase II family. Zn(2+) serves as cofactor.

The catalysed reaction is GTP + 4 H2O = 2,5-diamino-6-hydroxy-4-(5-phosphoribosylamino)-pyrimidine + formate + 2 phosphate + 3 H(+). Its pathway is cofactor biosynthesis; riboflavin biosynthesis; 5-amino-6-(D-ribitylamino)uracil from GTP: step 1/4. Functionally, catalyzes the conversion of GTP to 2,5-diamino-6-ribosylamino-4(3H)-pyrimidinone 5'-phosphate (DARP), formate and pyrophosphate. This is GTP cyclohydrolase-2 (ribA) from Xylella fastidiosa (strain Temecula1 / ATCC 700964).